Consider the following 717-residue polypeptide: Fatty acid oxidation complex subunit alpha (717 aa).

Residues 1-189 (MIYQSPTIEV…KVGAIDAVVA (189 aa)) form an enoyl-CoA hydratase/isomerase region. Position 296 (Asp-296) interacts with substrate. The 3-hydroxyacyl-CoA dehydrogenase stretch occupies residues 311 to 717 (KKVNSAAVLG…ANNGSYYQQA (407 aa)). Residues Met-324, Asp-343, 400–402 (VVE), Lys-407, and Ser-429 contribute to the NAD(+) site. Residue His-450 is the For 3-hydroxyacyl-CoA dehydrogenase activity of the active site. NAD(+) is bound at residue Asn-453. 2 residues coordinate substrate: Asn-500 and Tyr-660.

The protein in the N-terminal section; belongs to the enoyl-CoA hydratase/isomerase family. In the C-terminal section; belongs to the 3-hydroxyacyl-CoA dehydrogenase family. Heterotetramer of two alpha chains (FadB) and two beta chains (FadA).

The enzyme catalyses a (3S)-3-hydroxyacyl-CoA + NAD(+) = a 3-oxoacyl-CoA + NADH + H(+). The catalysed reaction is a (3S)-3-hydroxyacyl-CoA = a (2E)-enoyl-CoA + H2O. It carries out the reaction a 4-saturated-(3S)-3-hydroxyacyl-CoA = a (3E)-enoyl-CoA + H2O. It catalyses the reaction (3S)-3-hydroxybutanoyl-CoA = (3R)-3-hydroxybutanoyl-CoA. The enzyme catalyses a (3Z)-enoyl-CoA = a 4-saturated (2E)-enoyl-CoA. The catalysed reaction is a (3E)-enoyl-CoA = a 4-saturated (2E)-enoyl-CoA. It participates in lipid metabolism; fatty acid beta-oxidation. Involved in the aerobic and anaerobic degradation of long-chain fatty acids via beta-oxidation cycle. Catalyzes the formation of 3-oxoacyl-CoA from enoyl-CoA via L-3-hydroxyacyl-CoA. It can also use D-3-hydroxyacyl-CoA and cis-3-enoyl-CoA as substrate. The sequence is that of Fatty acid oxidation complex subunit alpha from Shewanella halifaxensis (strain HAW-EB4).